The following is an 892-amino-acid chain: Ataxin-7 (892 aa).

A compositionally biased stretch (basic and acidic residues) spans 1–15; it reads MSERAADDVRGEPRR. 2 disordered regions span residues 1-74 and 195-247; these read MSER…SAAA and SKGG…SRVP. A compositionally biased stretch (low complexity) spans 16–38; that stretch reads AAAAAGGAAAAAARQQQQQQQQQ. Positions 39-55 are enriched in pro residues; the sequence is QPPPPQPQRQQHPPPPP. A compositionally biased stretch (low complexity) spans 195-222; that stretch reads SKGGSASGSNRSSSGGVLSASSSSSKLL. Lysine 257 participates in a covalent cross-link: Glycyl lysine isopeptide (Lys-Gly) (interchain with G-Cter in SUMO); alternate. Residue lysine 257 forms a Glycyl lysine isopeptide (Lys-Gly) (interchain with G-Cter in SUMO2); alternate linkage. Disordered regions lie at residues 298 to 328, 389 to 505, 616 to 730, and 818 to 892; these read PTLP…NSNN, HKNK…ESVE, KSVP…SSHS, and SHGS…KARP. 2 stretches are compositionally biased toward basic and acidic residues: residues 318-327 and 389-403; these read LEKKPEDNSN and HKNK…RHPD. An SCA7 domain is found at 334 to 401; it reads KRLSEREFDP…KTREKELIRH (68 aa). Pro residues-rich tracts occupy residues 405–419, 448–458, and 468–483; these read QQPP…PAPP, HTPSLPRPPGC, and IDPP…PLPA. Positions 493–502 are enriched in acidic residues; that stretch reads EEGEGDDKEE. A compositionally biased stretch (polar residues) spans 616 to 629; the sequence is KSVPAHGTTLNAQP. Residues 640-669 show a composition bias toward low complexity; that stretch reads SMQSRQVSSSSSSPSTPSGLSSVPSSPMSR. The segment covering 670–680 has biased composition (basic residues); the sequence is KPQKLKSSKSL. Residues 685-695 are compositionally biased toward polar residues; it reads SSGNSTNCQNA. Low complexity-rich tracts occupy residues 716 to 730 and 840 to 851; these read HSSS…SSHS and SPSSSSINNSSS.

Belongs to the ataxin-7 family. As to quaternary structure, component of the SAGA transcription coactivator-HAT complex, at least composed of SUPT3H, GCN5L2, TAF5L, TAF6L, SUPT7L, TADA3L, TAD1L, TAF10, TAF12, TRRAP, TAF9 and ATXN7. The STAGA core complex is associated with a subcomplex required for histone deubiquitination composed of ATXN7L3, ENY2 and USP22. Interacts with SORBS1, PSMC1 and CRX. Interacts with TRRAP, GCN5L2 and TAF10. Interacts with alpha tubulin. In terms of processing, proteolytically cleaved by caspase-7 (CASP7). The cleavage may be involved in SCA7 degeneration: the isoform fragments may exert distinct toxic influences that could contribute to selective neurodegeneration. Post-translationally, sumoylation decreases the aggregation propensity and cellular toxicity of forms with an expanded poly-Gln region but has no effect on subcellular location or interaction with components of the STAGA complex. Isoform a is expressed in CNS, but is expressed predominantly in the peripherical tissues. As to expression, isoform b is expressed in CNS. Also highly expressed in the frontal lobe, skeletal muscle and spinal cord and is expressed at a lower level in the lung, lymphoblast and intestine.

It localises to the nucleus. Its subcellular location is the nucleolus. The protein resides in the nucleus matrix. It is found in the cytoplasm. The protein localises to the cytoskeleton. Acts as a component of the SAGA (aka STAGA) transcription coactivator-HAT complex. Mediates the interaction of SAGA complex with the CRX and is involved in CRX-dependent gene activation. Probably involved in tethering the deubiquitination module within the SAGA complex. Necessary for microtubule cytoskeleton stabilization. Involved in neurodegeneration. In Homo sapiens (Human), this protein is Ataxin-7 (ATXN7).